The following is a 176-amino-acid chain: UPF0098 protein Rv2140c (176 aa).

Thr-2 bears the N-acetylthreonine mark.

This sequence belongs to the UPF0098 family.

The protein is UPF0098 protein Rv2140c of Mycobacterium tuberculosis (strain ATCC 25618 / H37Rv).